A 314-amino-acid polypeptide reads, in one-letter code: Deoxyribonuclease-1-like 1 (314 aa).

The first 37 residues, methionine 1–alanine 37, serve as a signal peptide directing secretion. Asparagine 102 carries an N-linked (GlcNAc...) asparagine glycan. The active site involves glutamate 113. Asparagine 133 carries an N-linked (GlcNAc...) asparagine glycan. The active site involves histidine 164. Cysteine 203 and cysteine 240 form a disulfide bridge. Residue asparagine 239 is glycosylated (N-linked (GlcNAc...) asparagine).

This sequence belongs to the DNase I family. Highly expressed in heart and skeletal muscles. Low expression in brain and thymus. Intermediated expression in other tissues.

The protein localises to the endoplasmic reticulum. The protein is Deoxyribonuclease-1-like 1 (Dnase1l1) of Mus musculus (Mouse).